Here is a 71-residue protein sequence, read N- to C-terminus: Large ribosomal subunit protein uL29 (71 aa).

The protein belongs to the universal ribosomal protein uL29 family.

This chain is Large ribosomal subunit protein uL29, found in Rickettsia canadensis (strain McKiel).